The primary structure comprises 246 residues: Probable septum site-determining protein MinC (246 aa).

It belongs to the MinC family. In terms of assembly, interacts with MinD and FtsZ.

Cell division inhibitor that blocks the formation of polar Z ring septums. Rapidly oscillates between the poles of the cell to destabilize FtsZ filaments that have formed before they mature into polar Z rings. Prevents FtsZ polymerization. This Pseudomonas syringae pv. tomato (strain ATCC BAA-871 / DC3000) protein is Probable septum site-determining protein MinC.